We begin with the raw amino-acid sequence, 104 residues long: Small ribosomal subunit protein bS6 (104 aa).

This sequence belongs to the bacterial ribosomal protein bS6 family.

Binds together with bS18 to 16S ribosomal RNA. The sequence is that of Small ribosomal subunit protein bS6 from Elusimicrobium minutum (strain Pei191).